A 231-amino-acid chain; its full sequence is Ribosomal RNA small subunit methyltransferase G (231 aa).

S-adenosyl-L-methionine contacts are provided by residues Gly-92, Leu-97, 143–144 (VE), and Arg-162.

It belongs to the methyltransferase superfamily. RNA methyltransferase RsmG family.

The protein localises to the cytoplasm. The catalysed reaction is guanosine(527) in 16S rRNA + S-adenosyl-L-methionine = N(7)-methylguanosine(527) in 16S rRNA + S-adenosyl-L-homocysteine. Its function is as follows. Specifically methylates the N7 position of guanine in position 527 of 16S rRNA. This chain is Ribosomal RNA small subunit methyltransferase G, found in Burkholderia thailandensis (strain ATCC 700388 / DSM 13276 / CCUG 48851 / CIP 106301 / E264).